The primary structure comprises 340 residues: Cyclic GMP-AMP synthase-like receptor 3 (340 aa).

Residues Ser62 and 74-76 (EAD) contribute to the ATP site. Residues Glu74, Asp76, and Asp177 each contribute to the Mg(2+) site. Residues Lys241 and 255–259 (SYHLK) contribute to the ATP site. Mn(2+)-binding residues include Asp267 and Asp270.

It belongs to the mab-21 family. Mg(2+) serves as cofactor. Requires Mn(2+) as cofactor.

The enzyme catalyses 2 ATP = 3',3'-c-di-AMP + 2 diphosphate. Nucleotidyltransferase that catalyzes the formation of cyclic di-AMP (3',3'-c-di-AMP) from 2 molecules of ATP and plays a key role in innate immunity. Acts as a key sensor of double-stranded RNA (dsRNA), the presence of dsRNA in the cytoplasm being a danger signal that triggers the immune responses. Directly binds dsRNA, activating the nucleotidyltransferase activity, leading to synthesis of 3',3'-c-di-AMP, a second messenger that binds to and activates Sting, thereby triggering the immune response via activation of the NF-kappa-B transcription factor. The sequence is that of Cyclic GMP-AMP synthase-like receptor 3 from Stylophora pistillata (Smooth cauliflower coral).